A 168-amino-acid chain; its full sequence is Endoribonuclease YbeY (168 aa).

3 residues coordinate Zn(2+): H126, H130, and H136.

The protein belongs to the endoribonuclease YbeY family. It depends on Zn(2+) as a cofactor.

Its subcellular location is the cytoplasm. Its function is as follows. Single strand-specific metallo-endoribonuclease involved in late-stage 70S ribosome quality control and in maturation of the 3' terminus of the 16S rRNA. The polypeptide is Endoribonuclease YbeY (Agrobacterium fabrum (strain C58 / ATCC 33970) (Agrobacterium tumefaciens (strain C58))).